The sequence spans 511 residues: Lysine--tRNA ligase (511 aa).

2 residues coordinate Mg(2+): E422 and E429.

Belongs to the class-II aminoacyl-tRNA synthetase family. In terms of assembly, homodimer. It depends on Mg(2+) as a cofactor.

The protein localises to the cytoplasm. It carries out the reaction tRNA(Lys) + L-lysine + ATP = L-lysyl-tRNA(Lys) + AMP + diphosphate. This chain is Lysine--tRNA ligase, found in Chlorobaculum tepidum (strain ATCC 49652 / DSM 12025 / NBRC 103806 / TLS) (Chlorobium tepidum).